Consider the following 501-residue polypeptide: L-arabinose isomerase (501 aa).

Positions 306, 333, 350, and 450 each coordinate Mn(2+).

Belongs to the arabinose isomerase family. In terms of assembly, homohexamer. It depends on Mn(2+) as a cofactor.

The catalysed reaction is beta-L-arabinopyranose = L-ribulose. The protein operates within carbohydrate degradation; L-arabinose degradation via L-ribulose; D-xylulose 5-phosphate from L-arabinose (bacterial route): step 1/3. In terms of biological role, catalyzes the conversion of L-arabinose to L-ribulose. The sequence is that of L-arabinose isomerase from Serratia proteamaculans (strain 568).